Here is a 181-residue protein sequence, read N- to C-terminus: Probable Brix domain-containing ribosomal biogenesis protein (181 aa).

The 177-residue stretch at 5–181 folds into the Brix domain; that stretch reads CKVIITTSRE…RIKKVVYRHV (177 aa).

In terms of biological role, probably involved in the biogenesis of the ribosome. The sequence is that of Probable Brix domain-containing ribosomal biogenesis protein from Pyrobaculum aerophilum (strain ATCC 51768 / DSM 7523 / JCM 9630 / CIP 104966 / NBRC 100827 / IM2).